An 885-amino-acid chain; its full sequence is Translation initiation factor IF-2 (885 aa).

2 disordered regions span residues 135–159 (KAKAEAEAKAKAEAEAKAKAKAAAE) and 184–289 (QAEA…PESM). The span at 184–232 (QAEATKRKQDEEAAKAAEKARLLAEENSKRWAEEERQRLEAERYSDHHI) shows a compositional bias: basic and acidic residues. Basic residues predominate over residues 253–266 (GRRARNKNTAKSKR). Residues 267 to 276 (GGKDARDGRE) are compositionally biased toward basic and acidic residues. One can recognise a tr-type G domain in the interval 385 to 554 (PRAPVVTIMG…LLQAEVLELK (170 aa)). Residues 394 to 401 (GHVDHGKT) form a G1 region. 394 to 401 (GHVDHGKT) serves as a coordination point for GTP. A G2 region spans residues 419–423 (GITQH). Residues 440–443 (DTPG) are G3. Residues 440-444 (DTPGH) and 494-497 (NKMD) contribute to the GTP site. Residues 494-497 (NKMD) form a G4 region. The tract at residues 530–532 (SAK) is G5.

The protein belongs to the TRAFAC class translation factor GTPase superfamily. Classic translation factor GTPase family. IF-2 subfamily.

The protein resides in the cytoplasm. In terms of biological role, one of the essential components for the initiation of protein synthesis. Protects formylmethionyl-tRNA from spontaneous hydrolysis and promotes its binding to the 30S ribosomal subunits. Also involved in the hydrolysis of GTP during the formation of the 70S ribosomal complex. The protein is Translation initiation factor IF-2 of Shewanella sp. (strain MR-7).